A 569-amino-acid chain; its full sequence is Formate--tetrahydrofolate ligase (569 aa).

68-75 is an ATP binding site; it reads TPAGEGKT.

It belongs to the formate--tetrahydrofolate ligase family.

It catalyses the reaction (6S)-5,6,7,8-tetrahydrofolate + formate + ATP = (6R)-10-formyltetrahydrofolate + ADP + phosphate. It participates in one-carbon metabolism; tetrahydrofolate interconversion. The sequence is that of Formate--tetrahydrofolate ligase from Psychrobacter sp. (strain PRwf-1).